We begin with the raw amino-acid sequence, 124 residues long: Small ribosomal subunit protein uS13 (124 aa).

Residues Gly95–Lys124 are disordered.

Belongs to the universal ribosomal protein uS13 family. Part of the 30S ribosomal subunit. Forms a loose heterodimer with protein S19. Forms two bridges to the 50S subunit in the 70S ribosome.

Located at the top of the head of the 30S subunit, it contacts several helices of the 16S rRNA. In the 70S ribosome it contacts the 23S rRNA (bridge B1a) and protein L5 of the 50S subunit (bridge B1b), connecting the 2 subunits; these bridges are implicated in subunit movement. Contacts the tRNAs in the A and P-sites. This is Small ribosomal subunit protein uS13 from Rhodococcus erythropolis (strain PR4 / NBRC 100887).